A 200-amino-acid chain; its full sequence is ADP-ribose 1''-phosphate phosphatase (200 aa).

The Macro domain occupies 1 to 200; sequence MDPPSVRSKI…EVTVVRPHGG (200 aa). Residues 15-17, 29-31, 36-41, and 169-175 each bind substrate; these read GDL, ACN, WGKGIA, and FNAGLFG.

It belongs to the POA1 family.

The catalysed reaction is ADP-alpha-D-ribose 1''-phosphate + H2O = ADP-D-ribose + phosphate. Its function is as follows. Highly specific phosphatase involved in the metabolism of ADP-ribose 1''-phosphate (Appr1p) which is produced as a consequence of tRNA splicing. In Aspergillus fumigatus (strain ATCC MYA-4609 / CBS 101355 / FGSC A1100 / Af293) (Neosartorya fumigata), this protein is ADP-ribose 1''-phosphate phosphatase (poa1).